A 534-amino-acid chain; its full sequence is MQVAPNVWSKYFNIPNPGLRAYFSNVVSGQPEVYRTPFYKGMSLESICDEWYKKLVSIDTQWPTLMEFEDDLRKKVGPMSVMLPLKERMSDIDSYYDSISKDQVPFDTKAISAAKSEWKGVSRLRLRSEVNTVAVMKKSTNSGSPYFSKRKAVVSKTIPCDVYMDGRYCVMRQNGREWSGAAVLGWRGQEGGPKPTDVKQRVVWMFPFAVNIRELQVYQPLILTFQRLGLVPAWVSMEAVDRRITKMFDTKGPRDVVVCTDFSKFDQHFNPTCQSVAKELLADLLTGQEAVDWLERVFPIKYAIPLAYNWGEIRYGIHGMGSGSGGTNADETLVHRVLQHEAAISHHTTLNPNSQCLGDDGVLTYPGISAEDVMQSYSRHGLDMNLEKQYVSKQDCTYLRRWHHTDYRVDGMCVGVYSTMRALGRLAMQERYYDPDVWGEKMVTLRYLSIIENVKYHPLKEEFLDFCIKGDKTRLGLGIPGFLDNIAGEAQKAIDMMPDFLGYTKSLQYDGDLRRNAAAGIENWWVVQALKSRR.

The RdRp catalytic domain maps to Asp255–Val373.

Its subcellular location is the virion. It carries out the reaction RNA(n) + a ribonucleoside 5'-triphosphate = RNA(n+1) + diphosphate. Its function is as follows. RNA-directed RNA polymerase that is involved in both transcription and genome replication. This Human picobirnavirus (strain Human/Thailand/Hy005102/-) (PBV) protein is Potential RNA-dependent RNA polymerase (Segment-2).